A 282-amino-acid chain; its full sequence is Phosphatidylserine decarboxylase proenzyme (282 aa).

Catalysis depends on charge relay system; for autoendoproteolytic cleavage activity residues aspartate 88, histidine 145, and serine 248. Catalysis depends on serine 248, which acts as the Schiff-base intermediate with substrate; via pyruvic acid; for decarboxylase activity. Serine 248 carries the pyruvic acid (Ser); by autocatalysis modification.

Belongs to the phosphatidylserine decarboxylase family. PSD-B subfamily. Prokaryotic type I sub-subfamily. Heterodimer of a large membrane-associated beta subunit and a small pyruvoyl-containing alpha subunit. The cofactor is pyruvate. In terms of processing, is synthesized initially as an inactive proenzyme. Formation of the active enzyme involves a self-maturation process in which the active site pyruvoyl group is generated from an internal serine residue via an autocatalytic post-translational modification. Two non-identical subunits are generated from the proenzyme in this reaction, and the pyruvate is formed at the N-terminus of the alpha chain, which is derived from the carboxyl end of the proenzyme. The autoendoproteolytic cleavage occurs by a canonical serine protease mechanism, in which the side chain hydroxyl group of the serine supplies its oxygen atom to form the C-terminus of the beta chain, while the remainder of the serine residue undergoes an oxidative deamination to produce ammonia and the pyruvoyl prosthetic group on the alpha chain. During this reaction, the Ser that is part of the protease active site of the proenzyme becomes the pyruvoyl prosthetic group, which constitutes an essential element of the active site of the mature decarboxylase.

The protein resides in the cell membrane. The enzyme catalyses a 1,2-diacyl-sn-glycero-3-phospho-L-serine + H(+) = a 1,2-diacyl-sn-glycero-3-phosphoethanolamine + CO2. It participates in phospholipid metabolism; phosphatidylethanolamine biosynthesis; phosphatidylethanolamine from CDP-diacylglycerol: step 2/2. Catalyzes the formation of phosphatidylethanolamine (PtdEtn) from phosphatidylserine (PtdSer). In Dechloromonas aromatica (strain RCB), this protein is Phosphatidylserine decarboxylase proenzyme.